The following is a 309-amino-acid chain: Uricase-2 isozyme 1 (309 aa).

Residues lysine 18 and threonine 64 each act as charge relay system in the active site. Urate-binding residues include threonine 64, aspartate 65, phenylalanine 166, arginine 183, valine 238, glutamine 239, and asparagine 265. Residue histidine 267 is the Charge relay system of the active site. The Microbody targeting signal motif lies at serine 307 to leucine 309.

It belongs to the uricase family. Homotetramer. In terms of processing, the N-terminus is blocked. Expressed predominantly in the uninfected cells of the central tissue of the root nodule.

The protein localises to the peroxisome. The catalysed reaction is urate + O2 + H2O = 5-hydroxyisourate + H2O2. Its pathway is purine metabolism; urate degradation; (S)-allantoin from urate: step 1/3. Catalyzes the oxidation of uric acid to 5-hydroxyisourate, which is further processed to form (S)-allantoin. The chain is Uricase-2 isozyme 1 from Glycine max (Soybean).